Consider the following 319-residue polypeptide: NADH-quinone oxidoreductase subunit H 1 (319 aa).

Helical transmembrane passes span M1–V21, F74–I94, V107–A127, L147–L167, V179–A199, V238–L258, I262–L282, and F293–V313.

Belongs to the complex I subunit 1 family. NDH-1 is composed of 14 different subunits. Subunits NuoA, H, J, K, L, M, N constitute the membrane sector of the complex.

The protein resides in the cell inner membrane. It carries out the reaction a quinone + NADH + 5 H(+)(in) = a quinol + NAD(+) + 4 H(+)(out). Functionally, NDH-1 shuttles electrons from NADH, via FMN and iron-sulfur (Fe-S) centers, to quinones in the respiratory chain. The immediate electron acceptor for the enzyme in this species is believed to be ubiquinone. Couples the redox reaction to proton translocation (for every two electrons transferred, four hydrogen ions are translocated across the cytoplasmic membrane), and thus conserves the redox energy in a proton gradient. This subunit may bind ubiquinone. This chain is NADH-quinone oxidoreductase subunit H 1, found in Rhodopseudomonas palustris (strain BisB5).